We begin with the raw amino-acid sequence, 136 residues long: Holo-[acyl-carrier-protein] synthase (136 aa).

Residues D8 and E57 each coordinate Mg(2+).

Belongs to the P-Pant transferase superfamily. AcpS family. It depends on Mg(2+) as a cofactor.

It localises to the cytoplasm. The catalysed reaction is apo-[ACP] + CoA = holo-[ACP] + adenosine 3',5'-bisphosphate + H(+). In terms of biological role, transfers the 4'-phosphopantetheine moiety from coenzyme A to a Ser of acyl-carrier-protein. This Methylorubrum extorquens (strain CM4 / NCIMB 13688) (Methylobacterium extorquens) protein is Holo-[acyl-carrier-protein] synthase.